We begin with the raw amino-acid sequence, 346 residues long: Phosphoribosylformylglycinamidine cyclo-ligase (346 aa).

The protein belongs to the AIR synthase family.

The protein localises to the cytoplasm. The catalysed reaction is 2-formamido-N(1)-(5-O-phospho-beta-D-ribosyl)acetamidine + ATP = 5-amino-1-(5-phospho-beta-D-ribosyl)imidazole + ADP + phosphate + H(+). It functions in the pathway purine metabolism; IMP biosynthesis via de novo pathway; 5-amino-1-(5-phospho-D-ribosyl)imidazole from N(2)-formyl-N(1)-(5-phospho-D-ribosyl)glycinamide: step 2/2. This Geobacillus kaustophilus (strain HTA426) protein is Phosphoribosylformylglycinamidine cyclo-ligase.